We begin with the raw amino-acid sequence, 285 residues long: Dihydropteroate synthase (285 aa).

Residues 18–276 (PKIMGIVNLT…DVKATADALK (259 aa)) form the Pterin-binding domain. Asparagine 25 lines the Mg(2+) pocket. (7,8-dihydropterin-6-yl)methyl diphosphate-binding positions include threonine 66, aspartate 99, asparagine 119, aspartate 190, lysine 229, and 264-266 (RVH).

This sequence belongs to the DHPS family. In terms of assembly, homodimer. Mg(2+) is required as a cofactor.

It catalyses the reaction (7,8-dihydropterin-6-yl)methyl diphosphate + 4-aminobenzoate = 7,8-dihydropteroate + diphosphate. It functions in the pathway cofactor biosynthesis; tetrahydrofolate biosynthesis; 7,8-dihydrofolate from 2-amino-4-hydroxy-6-hydroxymethyl-7,8-dihydropteridine diphosphate and 4-aminobenzoate: step 1/2. Functionally, catalyzes the condensation of para-aminobenzoate (pABA) with 6-hydroxymethyl-7,8-dihydropterin diphosphate (DHPt-PP) to form 7,8-dihydropteroate (H2Pte), the immediate precursor of folate derivatives. The polypeptide is Dihydropteroate synthase (folP) (Neisseria meningitidis serogroup B (strain ATCC BAA-335 / MC58)).